Reading from the N-terminus, the 246-residue chain is Uridylate kinase (246 aa).

ATP is bound at residue 20 to 23 (KISG). Positions 28–33 (GDQGYG) are involved in allosteric activation by GTP. Glycine 62 is a UMP binding site. Residues glycine 63 and arginine 67 each contribute to the ATP site. Residues aspartate 82 and 143-150 (TGNPYFTT) contribute to the UMP site. 3 residues coordinate ATP: threonine 170, tyrosine 176, and aspartate 179.

It belongs to the UMP kinase family. Homohexamer.

It is found in the cytoplasm. The catalysed reaction is UMP + ATP = UDP + ADP. The protein operates within pyrimidine metabolism; CTP biosynthesis via de novo pathway; UDP from UMP (UMPK route): step 1/1. Allosterically activated by GTP. Inhibited by UTP. Catalyzes the reversible phosphorylation of UMP to UDP. The polypeptide is Uridylate kinase (Cereibacter sphaeroides (strain ATCC 17023 / DSM 158 / JCM 6121 / CCUG 31486 / LMG 2827 / NBRC 12203 / NCIMB 8253 / ATH 2.4.1.) (Rhodobacter sphaeroides)).